Consider the following 261-residue polypeptide: uncharacterized protein (261 aa).

The next 5 membrane-spanning stretches (helical) occupy residues phenylalanine 38–leucine 58, tyrosine 134–isoleucine 154, isoleucine 163–leucine 183, tyrosine 195–leucine 215, and histidine 219–valine 239.

The protein localises to the membrane. This is an uncharacterized protein from Dictyostelium discoideum (Social amoeba).